The chain runs to 96 residues: MQALIKISDKQYLVQKGDTLFVPRQKTDIGGTMEIASMARIDGANTVLNPAETVTAKVLGHVKDDKVVVFKKKRRKRYQSRNGHRQQMTQIEVVSL.

Positions 73-84 are enriched in basic residues; it reads KRRKRYQSRNGH. Residues 73–96 form a disordered region; the sequence is KRRKRYQSRNGHRQQMTQIEVVSL. The segment covering 85–96 has biased composition (polar residues); sequence RQQMTQIEVVSL.

It belongs to the bacterial ribosomal protein bL21 family. As to quaternary structure, part of the 50S ribosomal subunit. Contacts protein L20.

Its function is as follows. This protein binds to 23S rRNA in the presence of protein L20. This is Large ribosomal subunit protein bL21 from Chlorobium phaeovibrioides (strain DSM 265 / 1930) (Prosthecochloris vibrioformis (strain DSM 265)).